Consider the following 426-residue polypeptide: Histidinol dehydrogenase (426 aa).

The NAD(+) site is built by tyrosine 123, glutamine 185, and asparagine 208. 3 residues coordinate substrate: serine 231, glutamine 253, and histidine 256. The Zn(2+) site is built by glutamine 253 and histidine 256. Catalysis depends on proton acceptor residues glutamate 321 and histidine 322. Substrate-binding residues include histidine 322, aspartate 355, glutamate 409, and histidine 414. Aspartate 355 is a binding site for Zn(2+). Histidine 414 is a binding site for Zn(2+).

It belongs to the histidinol dehydrogenase family. Zn(2+) serves as cofactor.

It carries out the reaction L-histidinol + 2 NAD(+) + H2O = L-histidine + 2 NADH + 3 H(+). Its pathway is amino-acid biosynthesis; L-histidine biosynthesis; L-histidine from 5-phospho-alpha-D-ribose 1-diphosphate: step 9/9. Its function is as follows. Catalyzes the sequential NAD-dependent oxidations of L-histidinol to L-histidinaldehyde and then to L-histidine. The sequence is that of Histidinol dehydrogenase from Bacillus licheniformis (strain ATCC 14580 / DSM 13 / JCM 2505 / CCUG 7422 / NBRC 12200 / NCIMB 9375 / NCTC 10341 / NRRL NRS-1264 / Gibson 46).